Consider the following 348-residue polypeptide: Holliday junction branch migration complex subunit RuvB (348 aa).

Positions 3-183 are large ATPase domain (RuvB-L); the sequence is DDGLVSAAAS…FGFTAHLDFY (181 aa). ATP is bound by residues L22, R23, G64, K67, T68, S69, 130 to 132, R173, Y183, and R220; that span reads EDF. Residue T68 coordinates Mg(2+). The tract at residues 184 to 254 is small ATPAse domain (RuvB-S); it reads DADELARVLT…IAQAALRIYD (71 aa). The segment at 257 to 348 is head domain (RuvB-H); it reads GLGLDRLDRA…TQVSLFTEGE (92 aa). DNA is bound by residues R312 and R317.

It belongs to the RuvB family. As to quaternary structure, homohexamer. Forms an RuvA(8)-RuvB(12)-Holliday junction (HJ) complex. HJ DNA is sandwiched between 2 RuvA tetramers; dsDNA enters through RuvA and exits via RuvB. An RuvB hexamer assembles on each DNA strand where it exits the tetramer. Each RuvB hexamer is contacted by two RuvA subunits (via domain III) on 2 adjacent RuvB subunits; this complex drives branch migration. In the full resolvosome a probable DNA-RuvA(4)-RuvB(12)-RuvC(2) complex forms which resolves the HJ.

It is found in the cytoplasm. The catalysed reaction is ATP + H2O = ADP + phosphate + H(+). Its function is as follows. The RuvA-RuvB-RuvC complex processes Holliday junction (HJ) DNA during genetic recombination and DNA repair, while the RuvA-RuvB complex plays an important role in the rescue of blocked DNA replication forks via replication fork reversal (RFR). RuvA specifically binds to HJ cruciform DNA, conferring on it an open structure. The RuvB hexamer acts as an ATP-dependent pump, pulling dsDNA into and through the RuvAB complex. RuvB forms 2 homohexamers on either side of HJ DNA bound by 1 or 2 RuvA tetramers; 4 subunits per hexamer contact DNA at a time. Coordinated motions by a converter formed by DNA-disengaged RuvB subunits stimulates ATP hydrolysis and nucleotide exchange. Immobilization of the converter enables RuvB to convert the ATP-contained energy into a lever motion, pulling 2 nucleotides of DNA out of the RuvA tetramer per ATP hydrolyzed, thus driving DNA branch migration. The RuvB motors rotate together with the DNA substrate, which together with the progressing nucleotide cycle form the mechanistic basis for DNA recombination by continuous HJ branch migration. Branch migration allows RuvC to scan DNA until it finds its consensus sequence, where it cleaves and resolves cruciform DNA. This chain is Holliday junction branch migration complex subunit RuvB, found in Frankia casuarinae (strain DSM 45818 / CECT 9043 / HFP020203 / CcI3).